A 572-amino-acid polypeptide reads, in one-letter code: Sialate:O-sulfotransferase 1 (572 aa).

At 1-14 (MAKPFFRLQKFLRR) the chain is on the cytoplasmic side. A helical; Signal-anchor for type II membrane protein transmembrane segment spans residues 15–35 (TQFLLLFLTAAYLMTGSLLLL). At 36 to 572 (QRARVALPQA…AGLPREYVPR (537 aa)) the chain is on the extracellular side. N-linked (GlcNAc...) asparagine glycosylation occurs at asparagine 105. WSC domains follow at residues 139 to 231 (RGNY…YSVG) and 242 to 337 (TATY…DTRC). Residue asparagine 254 is glycosylated (N-linked (GlcNAc...) asparagine).

The protein belongs to the WSCD family.

It is found in the golgi apparatus membrane. It catalyses the reaction a ganglioside GM1b + 3'-phosphoadenylyl sulfate = an 8-O-sulfo-ganglioside GM1b + adenosine 3',5'-bisphosphate + H(+). Its function is as follows. Sialate:O-sulfotransferase which catalyzes 8-O-sulfation at the Sia-glycan level using 3'-phosphoadenosine 5'-phosphosulfate (PAPS) as a donor, forming 8-O-sulfated Sia (Sia8S)-glycans. Displays selectivity toward glycolipids such as GM1 gangliosides. This is Sialate:O-sulfotransferase 1 (Wscd1) from Mus musculus (Mouse).